Consider the following 459-residue polypeptide: NADH-ubiquinone oxidoreductase chain 4 (459 aa).

A run of 13 helical transmembrane segments spans residues 22-42 (HLSY…LQWL), 61-81 (PIST…ILVS), 94-113 (RTFT…AFSA), 114-134 (LEMM…LIII), 146-166 (AGTY…IALT), 197-217 (WFAL…HLWL), 225-245 (PIAG…YGII), 258-278 (LSYP…LICL), 285-304 (SLIA…AALL), 308-330 (LSIT…LFCL), 352-372 (LLPL…ALPP), 380-400 (LTII…TGLG), and 437-457 (LIMM…QLMT).

Belongs to the complex I subunit 4 family.

The protein localises to the mitochondrion membrane. It carries out the reaction a ubiquinone + NADH + 5 H(+)(in) = a ubiquinol + NAD(+) + 4 H(+)(out). Core subunit of the mitochondrial membrane respiratory chain NADH dehydrogenase (Complex I) that is believed to belong to the minimal assembly required for catalysis. Complex I functions in the transfer of electrons from NADH to the respiratory chain. The immediate electron acceptor for the enzyme is believed to be ubiquinone. This Pelomedusa subrufa (African side-necked turtle) protein is NADH-ubiquinone oxidoreductase chain 4 (MT-ND4).